The following is a 342-amino-acid chain: S-adenosylmethionine:tRNA ribosyltransferase-isomerase (342 aa).

It belongs to the QueA family. As to quaternary structure, monomer.

Its subcellular location is the cytoplasm. It catalyses the reaction 7-aminomethyl-7-carbaguanosine(34) in tRNA + S-adenosyl-L-methionine = epoxyqueuosine(34) in tRNA + adenine + L-methionine + 2 H(+). It functions in the pathway tRNA modification; tRNA-queuosine biosynthesis. Its function is as follows. Transfers and isomerizes the ribose moiety from AdoMet to the 7-aminomethyl group of 7-deazaguanine (preQ1-tRNA) to give epoxyqueuosine (oQ-tRNA). The polypeptide is S-adenosylmethionine:tRNA ribosyltransferase-isomerase (Bacillus licheniformis (strain ATCC 14580 / DSM 13 / JCM 2505 / CCUG 7422 / NBRC 12200 / NCIMB 9375 / NCTC 10341 / NRRL NRS-1264 / Gibson 46)).